The sequence spans 91 residues: Small ribosomal subunit protein bS16 (91 aa).

It belongs to the bacterial ribosomal protein bS16 family.

The protein is Small ribosomal subunit protein bS16 of Enterococcus faecalis (strain ATCC 700802 / V583).